A 349-amino-acid chain; its full sequence is S-adenosylmethionine:tRNA ribosyltransferase-isomerase (349 aa).

It belongs to the QueA family. As to quaternary structure, monomer.

The protein resides in the cytoplasm. The catalysed reaction is 7-aminomethyl-7-carbaguanosine(34) in tRNA + S-adenosyl-L-methionine = epoxyqueuosine(34) in tRNA + adenine + L-methionine + 2 H(+). The protein operates within tRNA modification; tRNA-queuosine biosynthesis. Functionally, transfers and isomerizes the ribose moiety from AdoMet to the 7-aminomethyl group of 7-deazaguanine (preQ1-tRNA) to give epoxyqueuosine (oQ-tRNA). This chain is S-adenosylmethionine:tRNA ribosyltransferase-isomerase, found in Pseudomonas putida (strain W619).